Reading from the N-terminus, the 485-residue chain is MKKLNMEILSERWIIATFSFQGRQYNTKKTSQILPALFAVICAAFAGYFILIGSGMFTEPSVALILLATITILLLSSSKKSFYFILLPLTLLHAFYTPTGLNFGPPSYQYIASLFATDILETKEFLLQIPVSSYLIAFAIPILIFLQYKSAVKFGIKFYRNKTFIALATLLFAYNMPLAEPLKETVSSTLKIVDEVQKLKQISQSDNWGKSTLENSRYDDYVIVLGESARKDYHHAYGYPIENTPFMSNAKGTLIDGFRSAGTNTVASLRLMLTFPDKEKWEPNYSLSLVDLIKSAGIKTYWLSNHGMIGKFDTPVSSLASKSDETFFLKKGGSFNSTNFSDFDLLPKFAQVLENSVQGKRFIVLHIYGSHPMACDRIEDYPKIFDDKDLNPRYGYLNCYVSSIKKTDEFLKRVYDQLEENVKKNHRTFSMIYFSDHGLCHQQDEKTIYFCSIKTVSAESTIIFRYSKFHQMIWNAKNIRCLNQV.

The next 4 membrane-spanning stretches (helical) occupy residues 33–53 (ILPA…ILIG), 55–75 (GMFT…ILLL), 81–101 (SFYF…PTGL), and 125–145 (FLLQ…ILIF).

This sequence belongs to the phosphoethanolamine transferase family.

It is found in the cell membrane. The chain is Putative phosphoethanolamine transferase HI_1064 from Haemophilus influenzae (strain ATCC 51907 / DSM 11121 / KW20 / Rd).